The following is a 157-amino-acid chain: Phosphopantetheine adenylyltransferase (157 aa).

T8 is a binding site for substrate. ATP-binding positions include 8–9 and H16; that span reads TF. The substrate site is built by K40, T72, and R86. Residues 87-89, E97, and 122-128 each bind ATP; these read GLR and YSFLSSS.

The protein belongs to the bacterial CoaD family. As to quaternary structure, homohexamer. The cofactor is Mg(2+).

Its subcellular location is the cytoplasm. The catalysed reaction is (R)-4'-phosphopantetheine + ATP + H(+) = 3'-dephospho-CoA + diphosphate. It functions in the pathway cofactor biosynthesis; coenzyme A biosynthesis; CoA from (R)-pantothenate: step 4/5. Reversibly transfers an adenylyl group from ATP to 4'-phosphopantetheine, yielding dephospho-CoA (dPCoA) and pyrophosphate. The polypeptide is Phosphopantetheine adenylyltransferase (Prochlorococcus marinus (strain AS9601)).